A 211-amino-acid chain; its full sequence is Dephospho-CoA kinase (211 aa).

The DPCK domain maps to 7 to 211 (LIGVIGRSGA…ILTRRGVLGE (205 aa)). 15–20 (GAGKNV) provides a ligand contact to ATP.

Belongs to the CoaE family.

It is found in the cytoplasm. The enzyme catalyses 3'-dephospho-CoA + ATP = ADP + CoA + H(+). It functions in the pathway cofactor biosynthesis; coenzyme A biosynthesis; CoA from (R)-pantothenate: step 5/5. Catalyzes the phosphorylation of the 3'-hydroxyl group of dephosphocoenzyme A to form coenzyme A. The polypeptide is Dephospho-CoA kinase (Treponema pallidum (strain Nichols)).